Here is a 797-residue protein sequence, read N- to C-terminus: Speckle targeted PIP5K1A-regulated poly(A) polymerase (797 aa).

Residues 14 to 44 form a Matrin-type zinc finger; it reads FHCNLCHVNIPNRPSLEDHVKGKKHLHLLRL. An RRM domain is found at 54–126; that stretch reads NSVFVSGFKA…LKLRVKPREK (73 aa). Ser-205 is an ATP binding site. Mg(2+) contacts are provided by Asp-216 and Asp-218. Positions 216, 218, 319, 341, 363, and 495 each coordinate UTP. Residue Asn-319 coordinates ATP. In terms of domain architecture, PAP-associated spans 421–495; sequence DLCTLLFGFF…NVLDPFELNH (75 aa). Residues 544–787 are KA1; binds the bulging loops of U6 snRNA but is dispensable for terminal uridylyltransferase activity; the sequence is QSEAAASSQP…FLPKMAETIM (244 aa). A disordered region spans residues 611–659; it reads EETQSLDKTDKSGSEMEVNNNRSLEDTNIQVKGEAGKKRPLSVEEGPST. Over residues 615–624 the composition is skewed to basic and acidic residues; it reads SLDKTDKSGS. Residues 627–640 are compositionally biased toward polar residues; sequence EVNNNRSLEDTNIQ.

Belongs to the DNA polymerase type-B-like family. Associates with the cleavage and polyadenylation specificity factor (CPSF) complex. The cofactor is Mg(2+). It depends on Mn(2+) as a cofactor.

It is found in the nucleus. It localises to the nucleolus. Its subcellular location is the nucleus speckle. The catalysed reaction is RNA(n) + UTP = RNA(n)-3'-uridine ribonucleotide + diphosphate. The enzyme catalyses RNA(n) + ATP = RNA(n)-3'-adenine ribonucleotide + diphosphate. Poly(A) polymerase that creates the 3'-poly(A) tail of specific pre-mRNAs. In addition to polyadenylation, it is also required for the 3'-end cleavage of pre-mRNAs: binds to the 3'UTR of targeted pre-mRNAs and promotes the recruitment and assembly of the CPSF complex on the 3'UTR of pre-mRNAs. In addition to adenylyltransferase activity, also has uridylyltransferase activity. However, the ATP ratio is higher than UTP in cells, suggesting that it functions primarily as a poly(A) polymerase. The protein is Speckle targeted PIP5K1A-regulated poly(A) polymerase (tut1) of Danio rerio (Zebrafish).